The chain runs to 293 residues: MKVAVYGKGGIGKSTTSCNISIALARRGRKVLQIGCDPKHDSTFTLTGFLIPTIIDTLQVKDYHYEDVWPEDVIYRGYGGVDCVEAGGPPAGAGCGGYVVGETVKLLKELNAFYEYDIILFDVLGDVVCGGFAAPLNYADYCIIITDNGFDALFAANRIAASVREKSHTHPLRLAGLVGNRTSGRDLIDKYVEACPMPVLEVLPLVEDIRVSRVKGKTLFEMAEYQPNLNYVCDFYLNIADQILSEPEGVVPREIPDRELFSLLSDFYLNSTFTNESDGGYDHQDVPLDFTII.

ATP contacts are provided by residues 10-15 and Lys39; that span reads GIGKST. Residue Ser14 participates in Mg(2+) binding. Residues Cys95 and Cys129 each contribute to the [4Fe-4S] cluster site. ATP is bound at residue 180-181; sequence NR.

It belongs to the NifH/BchL/ChlL family. In terms of assembly, homodimer. Protochlorophyllide reductase is composed of three subunits; ChlL, ChlN and ChlB. [4Fe-4S] cluster is required as a cofactor.

Its subcellular location is the plastid. The protein resides in the chloroplast. It carries out the reaction chlorophyllide a + oxidized 2[4Fe-4S]-[ferredoxin] + 2 ADP + 2 phosphate = protochlorophyllide a + reduced 2[4Fe-4S]-[ferredoxin] + 2 ATP + 2 H2O. It functions in the pathway porphyrin-containing compound metabolism; chlorophyll biosynthesis (light-independent). Functionally, component of the dark-operative protochlorophyllide reductase (DPOR) that uses Mg-ATP and reduced ferredoxin to reduce ring D of protochlorophyllide (Pchlide) to form chlorophyllide a (Chlide). This reaction is light-independent. The L component serves as a unique electron donor to the NB-component of the complex, and binds Mg-ATP. This Adiantum capillus-veneris (Maidenhair fern) protein is Light-independent protochlorophyllide reductase iron-sulfur ATP-binding protein.